Here is an 825-residue protein sequence, read N- to C-terminus: AMP deaminase 2 (825 aa).

The tract at residues 1-49 (MASYPSGSGKPKAKYPFKKRASLQASTAAPEARGGLGAPPLQSARSLPG) is disordered. A compositionally biased stretch (basic residues) spans 11–21 (PKAKYPFKKRA). A Phosphoserine modification is found at S22. R45 carries the omega-N-methylarginine modification. Residues S46, S64, and S80 each carry the phosphoserine modification. Y91 carries the phosphotyrosine modification. A phosphoserine mark is found at S97 and S114. Phosphothreonine is present on T134. Phosphoserine occurs at positions 136 and 138. Zn(2+) is bound by residues H364 and H366. Residues H366 and 435 to 440 (KFNAKY) contribute to the substrate site. H633 is a binding site for Zn(2+). Residue E636 coordinates substrate. H655 (proton acceptor) is an active-site residue. D710 is a Zn(2+) binding site. A substrate-binding site is contributed by 711 to 714 (DPLQ).

This sequence belongs to the metallo-dependent hydrolases superfamily. Adenosine and AMP deaminases family. As to quaternary structure, homotetramer. Requires Zn(2+) as cofactor. As to expression, highly expressed in cerebellum.

It catalyses the reaction AMP + H2O + H(+) = IMP + NH4(+). It participates in purine metabolism; IMP biosynthesis via salvage pathway; IMP from AMP: step 1/1. Functionally, AMP deaminase plays a critical role in energy metabolism. Catalyzes the deamination of AMP to IMP and plays an important role in the purine nucleotide cycle. The protein is AMP deaminase 2 of Homo sapiens (Human).